Consider the following 128-residue polypeptide: Fluoride-specific ion channel FluC 1 (128 aa).

The next 4 membrane-spanning stretches (helical) occupy residues 10-30 (VAFF…AFSF), 32-52 (GTVI…YFFL), 59-79 (AWLT…FSSF), and 93-113 (FGAL…AWAG). The Na(+) site is built by G71 and T74.

This sequence belongs to the fluoride channel Fluc/FEX (TC 1.A.43) family.

The protein localises to the cell membrane. The enzyme catalyses fluoride(in) = fluoride(out). With respect to regulation, na(+) is not transported, but it plays an essential structural role and its presence is essential for fluoride channel function. Fluoride-specific ion channel. Important for reducing fluoride concentration in the cell, thus reducing its toxicity. This is Fluoride-specific ion channel FluC 1 from Lactobacillus delbrueckii subsp. bulgaricus (strain ATCC 11842 / DSM 20081 / BCRC 10696 / JCM 1002 / NBRC 13953 / NCIMB 11778 / NCTC 12712 / WDCM 00102 / Lb 14).